The primary structure comprises 142 residues: Small ribosomal subunit protein bS16 (142 aa).

The interval 101–142 (RPSFDALGGDDAGKGEAITQKKKAEKKDEAAAESSSSESTEA) is disordered. Over residues 132–142 (AESSSSESTEA) the composition is skewed to low complexity.

It belongs to the bacterial ribosomal protein bS16 family.

In Streptomyces avermitilis (strain ATCC 31267 / DSM 46492 / JCM 5070 / NBRC 14893 / NCIMB 12804 / NRRL 8165 / MA-4680), this protein is Small ribosomal subunit protein bS16.